The primary structure comprises 327 residues: Melanoma-associated antigen B18 (327 aa).

A compositionally biased stretch (basic residues) spans Met-1–Arg-19. The disordered stretch occupies residues Met-1–Asp-85. Residues Met-46 to Gln-70 show a composition bias toward polar residues. An MAGE domain is found at Ile-91–Ala-289.

In terms of assembly, interacts with LNX1. Expressed in testis, stomach, large intestine, small intestine, spleen, lymph node, bone marrow lymphocytes and blood T-lymphocytes. Not detected in brain, heart, lung, liver or kidney (at protein level).

The protein resides in the cytoplasm. Its function is as follows. May enhance ubiquitin ligase activity of RING-type zinc finger-containing E3 ubiquitin-protein ligases. Proposed to act through recruitment and/or stabilization of the Ubl-conjugating enzyme (E2) at the E3:substrate complex. The protein is Melanoma-associated antigen B18 of Mus musculus (Mouse).